We begin with the raw amino-acid sequence, 199 residues long: V-type proton ATPase subunit E (199 aa).

It belongs to the V-ATPase E subunit family.

Its function is as follows. Produces ATP from ADP in the presence of a proton gradient across the membrane. This is V-type proton ATPase subunit E from Clostridium botulinum (strain Loch Maree / Type A3).